Reading from the N-terminus, the 275-residue chain is Alpha carbonic anhydrase 7 (275 aa).

The signal sequence occupies residues 1–27 (MVNYSSISCIFFVALFSIFTIVSISSA). 2 N-linked (GlcNAc...) asparagine glycosylation sites follow: asparagine 3 and asparagine 96. An Alpha-carbonic anhydrase domain is found at 38-272 (REFNYKKNDE…TNKRIVHLYR (235 aa)). A disulfide bridge links cysteine 63 with cysteine 222. The active-site Proton acceptor is histidine 104. Residues histidine 130, histidine 132, and histidine 149 each coordinate Zn(2+). 218-219 (TT) is a binding site for substrate. N-linked (GlcNAc...) asparagine glycosylation is present at asparagine 225.

This sequence belongs to the alpha-class carbonic anhydrase family. Zn(2+) serves as cofactor. N-glycosylated.

The protein localises to the plastid. Its subcellular location is the chloroplast stroma. It catalyses the reaction hydrogencarbonate + H(+) = CO2 + H2O. Functionally, reversible hydration of carbon dioxide. In Arabidopsis thaliana (Mouse-ear cress), this protein is Alpha carbonic anhydrase 7 (ACA7).